We begin with the raw amino-acid sequence, 1734 residues long: Gag-Pol polyprotein (1734 aa).

The N-myristoyl glycine; by host moiety is linked to residue Gly-2. Positions 107-217 are disordered; sequence PSPTAPILPS…STTSRAFPLR (111 aa). The PTAP/PSAP motif motif lies at 109–112; the sequence is PTAP. The LYPX(n)L motif signature appears at 128 to 132; sequence LYPAL. A PPXY motif motif is present at residues 161–164; the sequence is PPPY. Ser-191 is modified (phosphoserine; by host). An interaction with host PIAS4 region spans residues 344–392; that stretch reads GRSPTNLAKVKGITQGPNESPSAFLERLKEAYRRYTPYDPEDPGQETNV. An interaction with host UBE2I region spans residues 429–434; the sequence is IFNKRE. Basic and acidic residues-rich tracts occupy residues 434–465 and 485–498; these read ETPE…EKER and RQDR…RPQL. Disordered regions lie at residues 434–498 and 512–552; these read ETPE…RPQL and WAKD…PRIT. A coiled-coil region spans residues 437-478; the sequence is EEREERVRRETEEKEERRRAEEEQKEKERDRRRHREMSKLLA. Residues 501-518 form a CCHC-type zinc finger; that stretch reads DQCAYCKEKGHWAKDCPK. One can recognise a Peptidase A2 domain in the interval 560–630; that stretch reads VTFLVDTGAQ…CPYPLLGRDL (71 aa). Asp-565 functions as the Protease; shared with dimeric partner in the catalytic mechanism. The 192-residue stretch at 740–931 folds into the Reverse transcriptase domain; the sequence is LDQGILVPCQ…KQVKYLGYLL (192 aa). Asp-808, Asp-882, Asp-883, Asp-1182, Glu-1220, Asp-1241, and Asp-1311 together coordinate Mg(2+). One can recognise an RNase H type-1 domain in the interval 1173 to 1319; sequence PDADHTWYTD…ADQAAREAAI (147 aa). An HHCC-type zinc finger spans residues 1386-1426; sequence HRLTHLGYQKMKALLDRGESPYYMLNRDKTLQYVADSCTVC. One can recognise an Integrase catalytic domain in the interval 1443–1601; it reads RGHRPGSHWE…TPYEILYGAP (159 aa). 2 residues coordinate Mg(2+): Asp-1454 and Asp-1513.

It belongs to the retroviral Pol polyprotein family. Homohexamer; further associates as homomultimer. The virus core is composed of a lattice formed from hexagonal rings, each containing six capsid monomers. In terms of assembly, interacts (via PPXY motif) with host NEDD4. Interacts (via PSAP motif) with host TSG101. Interacts (via LYPX(n)L motif) with host PDCD6IP. As to quaternary structure, the reverse transcriptase is a monomer (Potential). Interacts (via RNase domains) with host release factor ETF1; this interaction is essential for translational readthrough of amber codon between viral gag and pol genes, as well as for viral replication. Homodimer. Mg(2+) is required as a cofactor. Post-translationally, ubiquitinated by ITCH. Gag can recruit the ubiquitin ligase Itch in an L domain-independent manner to facilitate virus release via a mechanism that involves Gag ubiquitination. Specific enzymatic cleavages by the viral protease yield mature proteins. The protease is released by autocatalytic cleavage. The polyprotein is cleaved during and after budding, this process is termed maturation. In terms of processing, sumoylated; which is required for virus replication. Post-translationally, phosphorylated on serine residues.

The protein localises to the virion. The protein resides in the host cell membrane. It is found in the host late endosome membrane. It localises to the host endosome. Its subcellular location is the host multivesicular body. The protein localises to the host cytoplasm. It catalyses the reaction DNA(n) + a 2'-deoxyribonucleoside 5'-triphosphate = DNA(n+1) + diphosphate. The catalysed reaction is Endonucleolytic cleavage to 5'-phosphomonoester.. With respect to regulation, most efficiently inhibited by Amprenavir, which is able to block Gag-Pol processing in infected cells. Its function is as follows. Plays a role in budding and is processed by the viral protease during virion maturation outside the cell. During budding, it recruits, in a PPXY-dependent or independent manner, Nedd4-like ubiquitin ligases that conjugate ubiquitin molecules to Gag-Pol, or to Gag-Pol binding host factors. Interaction with HECT ubiquitin ligases probably link the viral protein to the host ESCRT pathway and facilitates release. Functionally, targets Gag and gag-pol polyproteins to the plasma membrane via a multipartite membrane binding signal, that includes its myristoylated N-terminus. Also mediates nuclear localization of the pre-integration complex. Constituent of the pre-integration complex (PIC) which tethers the latter to mitotic chromosomes. This allows the integration of the viral genome into the host DNA. In terms of biological role, forms the spherical core of the virion that encapsulates the genomic RNA-nucleocapsid complex. Its function is as follows. Involved in the packaging and encapsidation of two copies of the genome. Binds with high affinity to conserved UCUG elements within the packaging signal, located near the 5'-end of the genome. This binding is dependent on genome dimerization. Acts as a nucleic acid chaperone which is involved in rearrangement of nucleic acid secondary structures during gRNA retrotranscription. Functionally, the aspartyl protease mediates proteolytic cleavages of Gag and Gag-Pol polyproteins during or shortly after the release of the virion from the plasma membrane. Cleavages take place as an ordered, step-wise cascade to yield mature proteins. This process is called maturation. Displays maximal activity during the budding process just prior to particle release from the cell (Potential). Cleaves the translation initiation factor eIF4G leading to the inhibition of host cap-dependent translation. RT is a multifunctional enzyme that converts the viral dimeric RNA genome into dsDNA in the cytoplasm, shortly after virus entry into the cell. This enzyme displays a DNA polymerase activity that can copy either DNA or RNA templates, and a ribonuclease H (RNase H) activity that cleaves the RNA strand of RNA-DNA heteroduplexes in a partially processive 3' to 5' endonucleasic mode. Conversion of viral genomic RNA into dsDNA requires many steps. A tRNA binds to the primer-binding site (PBS) situated at the 5' end of the viral RNA. RT uses the 3' end of the tRNA primer to perform a short round of RNA-dependent minus-strand DNA synthesis. The reading proceeds through the U5 region and ends after the repeated (R) region which is present at both ends of viral RNA. The portion of the RNA-DNA heteroduplex is digested by the RNase H, resulting in a ssDNA product attached to the tRNA primer. This ssDNA/tRNA hybridizes with the identical R region situated at the 3' end of viral RNA. This template exchange, known as minus-strand DNA strong stop transfer, can be either intra- or intermolecular. RT uses the 3' end of this newly synthesized short ssDNA to perform the RNA-dependent minus-strand DNA synthesis of the whole template. RNase H digests the RNA template except for a polypurine tract (PPT) situated at the 5' end of the genome. It is not clear if both polymerase and RNase H activities are simultaneous. RNase H probably can proceed both in a polymerase-dependent (RNA cut into small fragments by the same RT performing DNA synthesis) and a polymerase-independent mode (cleavage of remaining RNA fragments by free RTs). Secondly, RT performs DNA-directed plus-strand DNA synthesis using the PPT that has not been removed by RNase H as primers. PPT and tRNA primers are then removed by RNase H. The 3' and 5' ssDNA PBS regions hybridize to form a circular dsDNA intermediate. Strand displacement synthesis by RT to the PBS and PPT ends produces a blunt ended, linear dsDNA copy of the viral genome that includes long terminal repeats (LTRs) at both ends. In terms of biological role, catalyzes viral DNA integration into the host chromosome, by performing a series of DNA cutting and joining reactions. This enzyme activity takes place after virion entry into a cell and reverse transcription of the RNA genome in dsDNA. The first step in the integration process is 3' processing. This step requires a complex comprising the viral genome, matrix protein and integrase. This complex is called the pre-integration complex (PIC). The integrase protein removes 2 nucleotides from each 3' end of the viral DNA, leaving recessed CA OH's at the 3' ends. In the second step that requires cell division, the PIC enters cell nucleus. In the third step, termed strand transfer, the integrase protein joins the previously processed 3' ends to the 5' ends of strands of target cellular DNA at the site of integration. The last step is viral DNA integration into host chromosome. The protein is Gag-Pol polyprotein (pol) of AKV murine leukemia virus (AKR (endogenous) murine leukemia virus).